Reading from the N-terminus, the 239-residue chain is 1-(5-phosphoribosyl)-5-[(5-phosphoribosylamino)methylideneamino] imidazole-4-carboxamide isomerase (239 aa).

Asp8 serves as the catalytic Proton acceptor. The active-site Proton donor is the Asp130.

The protein belongs to the HisA/HisF family.

Its subcellular location is the cytoplasm. It carries out the reaction 1-(5-phospho-beta-D-ribosyl)-5-[(5-phospho-beta-D-ribosylamino)methylideneamino]imidazole-4-carboxamide = 5-[(5-phospho-1-deoxy-D-ribulos-1-ylimino)methylamino]-1-(5-phospho-beta-D-ribosyl)imidazole-4-carboxamide. It participates in amino-acid biosynthesis; L-histidine biosynthesis; L-histidine from 5-phospho-alpha-D-ribose 1-diphosphate: step 4/9. This chain is 1-(5-phosphoribosyl)-5-[(5-phosphoribosylamino)methylideneamino] imidazole-4-carboxamide isomerase, found in Lachnoclostridium phytofermentans (strain ATCC 700394 / DSM 18823 / ISDg) (Clostridium phytofermentans).